An 878-amino-acid polypeptide reads, in one-letter code: Bifunctional heparan sulfate N-deacetylase/N-sulfotransferase 1 (878 aa).

The Cytoplasmic portion of the chain corresponds to 1–17 (MSLSLKTRRFGRPVRPQ). A sufficient for localization to Golgi membrane region spans residues 1–169 (MSLSLKTRRF…VEYGVGIIGF (169 aa)). A helical; Signal-anchor for type II membrane protein transmembrane segment spans residues 18–38 (LVLLLLFALCLLSVFISAYYL). The Lumenal segment spans residues 39–878 (YGWKRGLEPS…WLREELQSTR (840 aa)). A heparan sulfate N-deacetylase 1 region spans residues 40–594 (GWKRGLEPSG…KRHKDIWSKE (555 aa)). The disordered stretch occupies residues 47–71 (PSGSEAQSPDCDEPKISPSRLLPMK). N-linked (GlcNAc...) asparagine glycans are attached at residues N231, N347, and N397. The tract at residues 595–878 (KTCDRFPKLL…WLREELQSTR (284 aa)) is heparan sulfate N-sulfotransferase 1. Catalysis depends on K610, which acts as the For sulfotransferase activity. 610–614 (KTGTT) lines the adenosine 3',5'-bisphosphate pocket. The N-linked (GlcNAc...) asparagine glycan is linked to N663. Adenosine 3',5'-bisphosphate is bound by residues S708 and W813. A disulfide bond links C814 and C824. 829–833 (KGRKY) lines the adenosine 3',5'-bisphosphate pocket.

This sequence belongs to the sulfotransferase 1 family. NDST subfamily. Monomer.

Its subcellular location is the golgi apparatus membrane. The protein resides in the golgi apparatus. It localises to the trans-Golgi network membrane. The catalysed reaction is alpha-D-glucosaminyl-[heparan sulfate](n) + 3'-phosphoadenylyl sulfate = N-sulfo-alpha-D-glucosaminyl-[heparan sulfate](n) + adenosine 3',5'-bisphosphate + 2 H(+). It functions in the pathway glycan metabolism; heparan sulfate biosynthesis. The protein operates within glycan metabolism; heparin biosynthesis. Its function is as follows. Essential bifunctional enzyme that catalyzes both the N-deacetylation and the N-sulfation of glucosamine (GlcNAc) of the glycosaminoglycan in heparan sulfate. Modifies the GlcNAc-GlcA disaccharide repeating sugar backbone to make N-sulfated heparosan, a prerequisite substrate for later modifications in heparin biosynthesis. Plays a role in determining the extent and pattern of sulfation of heparan sulfate. This Xenopus tropicalis (Western clawed frog) protein is Bifunctional heparan sulfate N-deacetylase/N-sulfotransferase 1 (ndst1).